The following is a 274-amino-acid chain: uncharacterized protein (274 aa).

This is an uncharacterized protein from Invertebrate iridescent virus 6 (IIV-6).